Consider the following 188-residue polypeptide: Elongation factor P-like protein (188 aa).

This sequence belongs to the elongation factor P family.

This Vibrio parahaemolyticus serotype O3:K6 (strain RIMD 2210633) protein is Elongation factor P-like protein.